The chain runs to 420 residues: Probable endo-beta-1,4-glucanase celB (420 aa).

The signal sequence occupies residues 1-18; that stretch reads MLRKLTPLALALLPLVAG. N118 carries N-linked (GlcNAc...) asparagine glycosylation. E215 functions as the Nucleophile in the catalytic mechanism. The active-site Proton donor is the E220. 3 N-linked (GlcNAc...) asparagine glycosylation sites follow: N234, N293, and N383.

This sequence belongs to the glycosyl hydrolase 7 (cellulase C) family.

It is found in the secreted. The catalysed reaction is Endohydrolysis of (1-&gt;4)-beta-D-glucosidic linkages in cellulose, lichenin and cereal beta-D-glucans.. Its function is as follows. Has endoglucanase activity on substrates containing beta-1,4 glycosidic bonds, like in carboxymethylcellulose (CMC), hydroxyethylcellulose (HEC) and beta-glucan. Involved in the degradation of complex natural cellulosic substrates. This Aspergillus terreus (strain NIH 2624 / FGSC A1156) protein is Probable endo-beta-1,4-glucanase celB (celB).